The primary structure comprises 295 residues: Non-selective voltage-gated ion channel VDAC2 (295 aa).

ATP is bound by residues Lys24 and Lys32. N6-acetyllysine; alternate is present on Lys32. Position 32 is an N6-succinyllysine; alternate (Lys32). A Glycyl lysine isopeptide (Lys-Gly) (interchain with G-Cter in ubiquitin); alternate cross-link involves residue Lys32. A run of 2 beta stranded transmembrane segments spans residues 38 to 45 and 51 to 60; these read LVKLDVKT and VEFSTSGSSN. A Glycyl lysine isopeptide (Lys-Gly) (interchain with G-Cter in ubiquitin) cross-link involves residue Lys65. The beta stranded transmembrane segment at 66–76 threads the bilayer; it reads VSGTLETKYKW. At Tyr79 the chain carries Phosphotyrosine. The next 3 beta stranded transmembrane spans lie at 81 to 88, 92 to 100, and 107 to 116; these read LTFTEKWN, TLGTEIAIE, and LKLTFDTTFS. Thr119 is subject to Phosphothreonine. Residue Lys121 is modified to N6-acetyllysine; alternate. Lys121 participates in a covalent cross-link: Glycyl lysine isopeptide (Lys-Gly) (interchain with G-Cter in ubiquitin); alternate. Lys122 participates in a covalent cross-link: Glycyl lysine isopeptide (Lys-Gly) (interchain with G-Cter in ubiquitin). Beta stranded transmembrane passes span 122 to 131, 135 to 144, 148 to 157, and 161 to 170; these read KSGKIKSAYK, INLGCDVDFD, PAIHGSAVFG, and WLAGYQMTFD. A Glycyl lysine isopeptide (Lys-Gly) (interchain with G-Cter in ubiquitin) cross-link involves residue Lys173. 6 consecutive transmembrane segments (beta stranded) span residues 177-187, 190-197, 201-210, 214-222, 229-238, and 243-250; these read TRSNFAVGYRT, FQLHTNVN, EFGGSIYQKV, FDTSVNLAW, TRFGIAAKYQ, and ASISAKVN. Ser252 carries the phosphoserine modification. NAD(+) contacts are provided by residues 254-256 and 272-276; these read LIG and SALVD. 2 consecutive transmembrane segments (beta stranded) span residues 254–263 and 267–275; these read LIGVGYTQTL and VKLTLSALV. N6-acetyllysine; alternate is present on Lys278. Lys278 participates in a covalent cross-link: Glycyl lysine isopeptide (Lys-Gly) (interchain with G-Cter in ubiquitin); alternate. Residues 285–295 form a beta stranded membrane-spanning segment; it reads HKLGLALELEA.

This sequence belongs to the eukaryotic mitochondrial porin family. In terms of assembly, monomer, homodimer and higher order oligomers; formation of higher order structures is necessary for scramblase activity. Interacts with ARMC12 in a TBC1D21-dependent manner. Interacts with KLC3. Interacts with SPATA33. Interacts with PPP3CC in a SPATA33-dependent manner. In terms of processing, ubiquitinated by PRKN during mitophagy, leading to its degradation and enhancement of mitophagy. Deubiquitinated by USP30. As to expression, highest levels of expression detected in testis, less but still abundant expression in heart, kidney, brain, and skeletal muscle. Expressed in the sperm midpiece (at protein level).

Its subcellular location is the mitochondrion outer membrane. The protein localises to the membrane. It catalyses the reaction chloride(in) = chloride(out). The catalysed reaction is K(+)(in) = K(+)(out). It carries out the reaction a 1,2-diacyl-sn-glycero-3-phospho-L-serine(in) = a 1,2-diacyl-sn-glycero-3-phospho-L-serine(out). The enzyme catalyses a 1,2-diacyl-sn-glycero-3-phosphocholine(in) = a 1,2-diacyl-sn-glycero-3-phosphocholine(out). It catalyses the reaction a 1,2-diacyl-sn-glycero-3-phospho-(1D-myo-inositol)(in) = a 1,2-diacyl-sn-glycero-3-phospho-(1D-myo-inositol)(out). Functionally, non-selective voltage-gated ion channel that mediates the transport of anions and cations through the mitochondrion outer membrane and plasma membrane. The channel adopts an open conformation at zero mV and a closed conformation at both positive and negative potentials. There are two populations of channels; the main that functions in a lower open-state conductance with lower ion selectivity, that switch, in a voltage-dependent manner, from the open to a low-conducting 'closed' state and the other that has a normal ion selectivity in the typical high conductance, 'open' state. Binds various lipids, including the sphingolipid ceramide, the phospholipid phosphatidylcholine, and the sterols cholesterol and oxysterol. Binding of ceramide promotes the mitochondrial outer membrane permeabilization (MOMP) apoptotic pathway. In terms of biological role, catalyzes the scrambling of phospholipids across the outer mitochondrial membrane; the mechanism is unrelated to channel activity and is capable of translocating both anionic and zwitterionic phospholipids. The polypeptide is Non-selective voltage-gated ion channel VDAC2 (Mus musculus (Mouse)).